Here is a 224-residue protein sequence, read N- to C-terminus: Oxaloacetate tautomerase FAHD2, mitochondrial (224 aa).

A mitochondrion-targeting transit peptide spans methionine 1–leucine 30. Residues glutamate 67, glutamate 69, and aspartate 98 each contribute to the Mg(2+) site.

This sequence belongs to the FAH family. Mg(2+) is required as a cofactor. Requires Mn(2+) as cofactor.

It is found in the mitochondrion. The catalysed reaction is oxaloacetate = enol-oxaloacetate. Its function is as follows. Tautomerase that converts enol-oxaloacetate, a strong inhibitor of succinate dehydrogenase, to the physiological keto form of oxaloacetate. The chain is Oxaloacetate tautomerase FAHD2, mitochondrial from Arabidopsis thaliana (Mouse-ear cress).